A 152-amino-acid polypeptide reads, in one-letter code: Large ribosomal subunit protein uL13 (152 aa).

The interval 129–152 (EHPHEAQSPEVLDVKSMNKKNTRS) is disordered.

The protein belongs to the universal ribosomal protein uL13 family. Part of the 50S ribosomal subunit.

Its function is as follows. This protein is one of the early assembly proteins of the 50S ribosomal subunit, although it is not seen to bind rRNA by itself. It is important during the early stages of 50S assembly. The chain is Large ribosomal subunit protein uL13 from Ruegeria sp. (strain TM1040) (Silicibacter sp.).